The following is a 331-amino-acid chain: Olfactory receptor 6S1 (331 aa).

The Extracellular portion of the chain corresponds to 1-29; sequence MSPDGNHSSDPTEFVLAGLPNLNSARVEL. An N-linked (GlcNAc...) asparagine glycan is attached at Asn-6. Residues 30–50 form a helical membrane-spanning segment; that stretch reads FSVFLLVYLLNLTGNVLIVGV. Topologically, residues 51–59 are cytoplasmic; it reads VRADTRLQT. The chain crosses the membrane as a helical span at residues 60 to 80; it reads PMYFFLGNLSCLEILLTSVII. Residues 81-99 are Extracellular-facing; that stretch reads PKMLSNFLSRQHTISFAAC. An intrachain disulfide couples Cys-99 to Cys-182. A helical transmembrane segment spans residues 100–120; sequence ITQFYFYFFLGASEFLLLAVM. Residues 121–147 are Cytoplasmic-facing; sequence SADRYLAICHPLRYPLLMSGAVCFRVA. A helical transmembrane segment spans residues 148 to 168; it reads LACWVGGLVPVLGPTVAVALL. At 169 to 207 the chain is on the extracellular side; that stretch reads PFCKQGAVVQHFFCDSGPLLRLACTNTKKLEETDFVLAS. The helical transmembrane segment at 208–228 threads the bilayer; it reads LVIVSSLLITAVSYGLIVLAV. Over 229 to 242 the chain is Cytoplasmic; it reads LSIPSASGRQKAFS. A helical membrane pass occupies residues 243-263; it reads TCTSHLIVVTLFYGSAIFLYV. Residues 264–274 are Extracellular-facing; it reads RPSQSGSVDTN. Residues 275-295 traverse the membrane as a helical segment; the sequence is WAVTVITTFVTPLLNPFIYAL. At 296–331 the chain is on the cytoplasmic side; that stretch reads RNEQVKEALKDMFRKVVAGVLGNLLLDKCLSEKAVK.

Belongs to the G-protein coupled receptor 1 family.

The protein localises to the cell membrane. In terms of biological role, odorant receptor. This chain is Olfactory receptor 6S1 (OR6S1), found in Homo sapiens (Human).